A 476-amino-acid chain; its full sequence is Adenosylhomocysteinase (476 aa).

Residues Thr67, Asp142, and Glu202 each coordinate substrate. Residue 203–205 participates in NAD(+) binding; that stretch reads TTT. Residues Lys232 and Asp236 each contribute to the substrate site. Residues Asn237, 266–271, Glu289, Asn324, 345–347, and Asn390 each bind NAD(+); these read GYGDVG and IGH.

This sequence belongs to the adenosylhomocysteinase family. Requires NAD(+) as cofactor.

Its subcellular location is the cytoplasm. The catalysed reaction is S-adenosyl-L-homocysteine + H2O = L-homocysteine + adenosine. It functions in the pathway amino-acid biosynthesis; L-homocysteine biosynthesis; L-homocysteine from S-adenosyl-L-homocysteine: step 1/1. Its function is as follows. May play a key role in the regulation of the intracellular concentration of adenosylhomocysteine. The sequence is that of Adenosylhomocysteinase from Prochlorococcus marinus (strain SARG / CCMP1375 / SS120).